The primary structure comprises 139 residues: MAMTYHLDVVSAEQQMFSGLVEKIQVTGSEGELGIYPGHAPLLTAIKPGMIRIVKQHGHEEFIYLSGGILEVQPGSVTVLADTAIRGQDLDEARALEAKRKAEEHIKSSHGDVDYAQASAELAKAIAKLRVIELTKKAM.

This sequence belongs to the ATPase epsilon chain family. F-type ATPases have 2 components, CF(1) - the catalytic core - and CF(0) - the membrane proton channel. CF(1) has five subunits: alpha(3), beta(3), gamma(1), delta(1), epsilon(1). CF(0) has three main subunits: a, b and c.

Its subcellular location is the cell inner membrane. Produces ATP from ADP in the presence of a proton gradient across the membrane. The chain is ATP synthase epsilon chain from Salmonella typhimurium (strain LT2 / SGSC1412 / ATCC 700720).